Reading from the N-terminus, the 86-residue chain is Large ribosomal subunit protein uL10 (86 aa).

It belongs to the universal ribosomal protein uL10 family. In terms of assembly, part of the ribosomal stalk of the 50S ribosomal subunit. The N-terminus interacts with L11 and the large rRNA to form the base of the stalk. The C-terminus forms an elongated spine to which L12 dimers bind in a sequential fashion forming a multimeric L10(L12)X complex.

Its function is as follows. Forms part of the ribosomal stalk, playing a central role in the interaction of the ribosome with GTP-bound translation factors. The protein is Large ribosomal subunit protein uL10 (rplJ) of Serratia marcescens.